We begin with the raw amino-acid sequence, 2410 residues long: Dual specificity protein kinase splA (2410 aa).

Disordered regions lie at residues 29–48 (NNNNNNNNNNNNNNNNNNNN), 66–103 (NHPSLKIPPPPSPTSPYVRRHARQHSRSNSSNSPGELT), 116–158 (NTQT…SNGG), 187–252 (NISP…SSGI), 508–647 (QQLQ…VPSA), and 659–820 (SSSS…KKEG). 2 stretches are compositionally biased toward low complexity: residues 116–128 (NTQTSPPTSTSPN) and 137–158 (NTTTSSTTITRNSNNINNSNGG). Over residues 514–525 (QPPPTIQPPPQQ) the composition is skewed to pro residues. Residues 530-544 (LRGNRSSGNLSGLNS) show a composition bias toward low complexity. Residues 545–554 (FSLKQSTDSL) are compositionally biased toward polar residues. Low complexity predominate over residues 560–583 (SQQSTVSSNSTPIAATPISPLTAP). The segment covering 584–594 (TSPPPPPPPPT) has biased composition (pro residues). Composition is skewed to low complexity over residues 595–618 (NFNSKFNNNNNNNINNSSNNNTTV), 627–639 (VLPKSPSSRSPRP), 659–686 (SSSSNISTNNTDLNLSSSSSSSPPLNIS), 701–738 (SPSYKQQQQQQQQQQQQQQQLNNSSNSSYSPKPRSPSV), 746–759 (ISPNSSPIGSPNIS), and 777–813 (NTNNNNNNNNNNNNNNNNNNNNNNNNNNNNNNNNNTN). B30.2/SPRY domains follow at residues 822–1004 (SSWF…GPFS) and 1020–1209 (DSGG…PPFK). Disordered regions lie at residues 1228–1428 (PNGN…NNIY) and 1493–1512 (SLGVSFSSPSSSPKTSPRKI). Composition is skewed to low complexity over residues 1229–1359 (NGNN…NNNI), 1373–1399 (SSTGSLGGNNSSGNNNSSSGSIGNNSS), 1419–1428 (SSTNNNNNIY), and 1493–1507 (SLGVSFSSPSSSPKT). Positions 1481–1703 (PITASTNHTL…CVATFPGGHF (223 aa)) constitute a B30.2/SPRY 3 domain. The SAM domain occupies 1734 to 1798 (WAPNDVAIWL…INRLNRMIQI (65 aa)). Residues 1862-2105 (KSYTQKEIED…PPPPPQLPVR (244 aa)) form a disordered region. The span at 1865-1874 (TQKEIEDRNR) shows a compositional bias: basic and acidic residues. Low complexity predominate over residues 1951 to 1967 (SVSSTGGSSGFLTFPSS). The segment covering 1989 to 2002 (ITSNYKGITNTGQP) has biased composition (polar residues). Residues 2020-2070 (SNNGNNGNNNNNNNNNNIKANQQQQQQSSYQQSQTQQQQQHITSTSTSTTN) are compositionally biased toward low complexity. Residues 2089–2102 (PSRPPPPPPPPPQL) are compositionally biased toward pro residues. The region spanning 2115–2387 (LEFGQTIGKG…FKQIIVHLKE (273 aa)) is the Protein kinase domain. Residues 2121–2129 (IGKGFFGEV) and Lys2142 contribute to the ATP site. Asp2243 functions as the Proton acceptor in the catalytic mechanism.

The protein belongs to the protein kinase superfamily. TKL Tyr protein kinase family. Post-translationally, tyrosine kinase domain is capable of autophosphorylation, in vitro; however it is also autophosphorylated on serine and threonine residues.

It catalyses the reaction L-tyrosyl-[protein] + ATP = O-phospho-L-tyrosyl-[protein] + ADP + H(+). Functionally, essential for spore differentiation. The protein is Dual specificity protein kinase splA (splA) of Dictyostelium discoideum (Social amoeba).